The following is a 356-amino-acid chain: Pavine N-methyltransferase (356 aa).

The S-adenosyl-L-homocysteine site is built by Phe-96, Ser-97, Gly-135, Asn-159, Gln-163, Asp-185, Val-186, and Val-201. The S-adenosyl-L-methionine site is built by Phe-96, Ser-97, Gly-135, Asn-159, Gln-163, Asp-185, Val-186, and Val-201. Glu-205 is a (S)-tetrahydropapaverine binding site. Cys-331 is a catalytic residue.

This sequence belongs to the CFA/CMAS family. As to quaternary structure, homodimer.

Its subcellular location is the cytoplasm. It catalyses the reaction (+-)-pavine + S-adenosyl-L-methionine = N-methylpavine + S-adenosyl-L-homocysteine + H(+). The catalysed reaction is (S)-reticuline + S-adenosyl-L-methionine = (S)-tembetarine + S-adenosyl-L-homocysteine + H(+). It carries out the reaction (S)-stylopine + S-adenosyl-L-methionine = (S)-cis-N-methylstylopine + S-adenosyl-L-homocysteine. The enzyme catalyses (S)-scoulerine + S-adenosyl-L-methionine = (S)-cis-N-methylscoulerine + S-adenosyl-L-homocysteine. It catalyses the reaction (S)-tetrahydropapaverine + S-adenosyl-L-methionine = (S)-N-methyltetrahydropapaverine + S-adenosyl-L-homocysteine + H(+). The catalysed reaction is (S)-tetrahydropalmatine + S-adenosyl-L-methionine = (S)-cis-N-methyltetrahydropalmatine + S-adenosyl-L-homocysteine. The protein operates within alkaloid biosynthesis. In the presence of a racemic mixture of tetrahydropapaverine (THP), one molecule of (S)-THP binds in a productive mode, while one molecule of (R)-THP is bound next to it in a non-productive mode. The (R)-THP seems to inhibit the release of products from the enzyme when higher concentrations of the racemic substrate are added to the reaction. Functionally, N-methyltransferase with a substrate preference for (+-)-pavine and (S)-reticuline, but also active with the protoberberines scoulerine and stylopine and, to a lesser extent, tetrahydropapaverine (THP) and tetrahydropalmatine. Is not active on (R)-reticuline, cryptopine, glaucine, codeine, canadaline, noscapine and berbamine. This is Pavine N-methyltransferase from Thalictrum flavum subsp. glaucum (Yellow meadow rue).